The primary structure comprises 88 residues: Small ribosomal subunit protein uS17 (88 aa).

The protein belongs to the universal ribosomal protein uS17 family. Part of the 30S ribosomal subunit.

Functionally, one of the primary rRNA binding proteins, it binds specifically to the 5'-end of 16S ribosomal RNA. This Syntrophotalea carbinolica (strain DSM 2380 / NBRC 103641 / GraBd1) (Pelobacter carbinolicus) protein is Small ribosomal subunit protein uS17.